A 149-amino-acid chain; its full sequence is MSTQVQEQVVIINAEGQILGRMASNVVRLLKEGKKVIIVNGEKAVISGEKNRVIESYKLLLTVKTLFNPYRNGIRRPRSPINIVKRTIRGMLPKSSKGRRMLKNVKIYVGVPKEFEGRQFIKFPDSDVSRLKGKYVTVEVVSKELGWSG.

It belongs to the universal ribosomal protein uL13 family. As to quaternary structure, part of the 50S ribosomal subunit.

In terms of biological role, this protein is one of the early assembly proteins of the 50S ribosomal subunit, although it is not seen to bind rRNA by itself. It is important during the early stages of 50S assembly. The protein is Large ribosomal subunit protein uL13 of Saccharolobus solfataricus (strain ATCC 35092 / DSM 1617 / JCM 11322 / P2) (Sulfolobus solfataricus).